The sequence spans 240 residues: DUP240 protein DFP1 (240 aa).

The disordered stretch occupies residues 1–29 (MQPYLKKNTHATDDPKASPLKEGSPDNPE). A run of 2 helical transmembrane segments spans residues 61-81 (IMIN…DIWF) and 84-104 (VLSP…VLQI).

The protein belongs to the DUP/COS family.

Its subcellular location is the membrane. This chain is DUP240 protein DFP1, found in Saccharomyces cerevisiae (Baker's yeast).